We begin with the raw amino-acid sequence, 149 residues long: Protein-export protein SecB 2 (149 aa).

Belongs to the SecB family. As to quaternary structure, homotetramer, a dimer of dimers. One homotetramer interacts with 1 SecA dimer.

It localises to the cytoplasm. Its function is as follows. One of the proteins required for the normal export of preproteins out of the cell cytoplasm. It is a molecular chaperone that binds to a subset of precursor proteins, maintaining them in a translocation-competent state. It also specifically binds to its receptor SecA. This is Protein-export protein SecB 2 from Francisella tularensis subsp. tularensis (strain FSC 198).